A 209-amino-acid polypeptide reads, in one-letter code: uncharacterized protein (209 aa).

The N-terminal stretch at 1–19 is a signal peptide; sequence MGYFPYLAVFVCLLASGDA. Residues Asn-41 and Asn-109 are each glycosylated (N-linked (GlcNAc...) asparagine).

In terms of tissue distribution, component of the acid-soluble organic matrix of prismatic shell layers (at protein level).

The protein localises to the secreted. This is an uncharacterized protein from Haliotis asinina (Donkey's ear abalone).